Reading from the N-terminus, the 317-residue chain is Probable cell division protein WhiA (317 aa).

The H-T-H motif DNA-binding region spans 276–310 (TLKELGEMVSGGKISKSGINHRLRKIDDIAEKLRA).

It belongs to the WhiA family.

Involved in cell division and chromosome segregation. This is Probable cell division protein WhiA from Bacillus thuringiensis (strain Al Hakam).